The primary structure comprises 236 residues: Pyridoxal 5'-phosphate synthase subunit PdxT (236 aa).

Gly61 to Ser63 is a binding site for L-glutamine. Cys93 (nucleophile) is an active-site residue. L-glutamine is bound by residues Arg127 and Ile163 to Arg164. Catalysis depends on charge relay system residues His215 and Glu217.

The protein belongs to the glutaminase PdxT/SNO family. In the presence of PdxS, forms a dodecamer of heterodimers. Only shows activity in the heterodimer.

The catalysed reaction is aldehydo-D-ribose 5-phosphate + D-glyceraldehyde 3-phosphate + L-glutamine = pyridoxal 5'-phosphate + L-glutamate + phosphate + 3 H2O + H(+). It carries out the reaction L-glutamine + H2O = L-glutamate + NH4(+). It functions in the pathway cofactor biosynthesis; pyridoxal 5'-phosphate biosynthesis. Its function is as follows. Catalyzes the hydrolysis of glutamine to glutamate and ammonia as part of the biosynthesis of pyridoxal 5'-phosphate. The resulting ammonia molecule is channeled to the active site of PdxS. The protein is Pyridoxal 5'-phosphate synthase subunit PdxT of Pseudarthrobacter chlorophenolicus (strain ATCC 700700 / DSM 12829 / CIP 107037 / JCM 12360 / KCTC 9906 / NCIMB 13794 / A6) (Arthrobacter chlorophenolicus).